The following is a 188-amino-acid chain: Probable nicotinate-nucleotide adenylyltransferase (188 aa).

It belongs to the NadD family.

The catalysed reaction is nicotinate beta-D-ribonucleotide + ATP + H(+) = deamido-NAD(+) + diphosphate. The protein operates within cofactor biosynthesis; NAD(+) biosynthesis; deamido-NAD(+) from nicotinate D-ribonucleotide: step 1/1. Functionally, catalyzes the reversible adenylation of nicotinate mononucleotide (NaMN) to nicotinic acid adenine dinucleotide (NaAD). The polypeptide is Probable nicotinate-nucleotide adenylyltransferase (Listeria innocua serovar 6a (strain ATCC BAA-680 / CLIP 11262)).